A 327-amino-acid chain; its full sequence is Phenylalanine--tRNA ligase alpha subunit (327 aa).

Glu-252 serves as a coordination point for Mg(2+).

The protein belongs to the class-II aminoacyl-tRNA synthetase family. Phe-tRNA synthetase alpha subunit type 1 subfamily. As to quaternary structure, tetramer of two alpha and two beta subunits. It depends on Mg(2+) as a cofactor.

It is found in the cytoplasm. It catalyses the reaction tRNA(Phe) + L-phenylalanine + ATP = L-phenylalanyl-tRNA(Phe) + AMP + diphosphate + H(+). This chain is Phenylalanine--tRNA ligase alpha subunit, found in Vibrio campbellii (strain ATCC BAA-1116).